The primary structure comprises 344 residues: MKERLYELKRQALEQIGQARDLKALNDVRVAYLGKKGPITEVLRGMGALPPEERPKIGALANEVREAIQQALEAKQAKLEQEEVERKLAAEAIDVTLPGRPVSLGNPHPLTRVIEEIEDLFIGMGYTVAEGPEVETDYYNFEALNLPKGHPARDMQDSFYITEEILLRTHTSPMQARTMEKHRGRGPVKIICPGKVYRRDTDDATHSHQFTQIEGLVVDRNIRMSDLKGTLREFARKLFGEGRDIRFRPSFFPFTEPSVEVDVSCFRCEGRGCGVCKGTGWIEILGAGMVHPNVLEMAGFDSKTYTGFAFGMGPERIAMLKYGIDDIRHFYQNDLRFLRQFLRV.

Position 256 (glutamate 256) interacts with Mg(2+).

This sequence belongs to the class-II aminoacyl-tRNA synthetase family. Phe-tRNA synthetase alpha subunit type 1 subfamily. Tetramer of two alpha and two beta subunits. Requires Mg(2+) as cofactor.

The protein localises to the cytoplasm. It catalyses the reaction tRNA(Phe) + L-phenylalanine + ATP = L-phenylalanyl-tRNA(Phe) + AMP + diphosphate + H(+). This is Phenylalanine--tRNA ligase alpha subunit from Geobacillus kaustophilus (strain HTA426).